A 1433-amino-acid polypeptide reads, in one-letter code: DNA polymerase III PolC-type (1433 aa).

The 157-residue stretch at 419 to 575 (FVVFDVETTG…YDAEATGHLL (157 aa)) folds into the Exonuclease domain.

Belongs to the DNA polymerase type-C family. PolC subfamily.

It is found in the cytoplasm. The enzyme catalyses DNA(n) + a 2'-deoxyribonucleoside 5'-triphosphate = DNA(n+1) + diphosphate. In terms of biological role, required for replicative DNA synthesis. This DNA polymerase also exhibits 3' to 5' exonuclease activity. This is DNA polymerase III PolC-type from Halalkalibacterium halodurans (strain ATCC BAA-125 / DSM 18197 / FERM 7344 / JCM 9153 / C-125) (Bacillus halodurans).